A 522-amino-acid chain; its full sequence is Protein nucleotidyltransferase YdiU (522 aa).

Positions 109, 111, 112, 132, 144, 145, 195, and 202 each coordinate ATP. The Proton acceptor role is filled by Asp271. Asn272 and Asp281 together coordinate Mg(2+). Residue Asp281 coordinates ATP.

It belongs to the SELO family. Requires Mg(2+) as cofactor. It depends on Mn(2+) as a cofactor.

It carries out the reaction L-seryl-[protein] + ATP = 3-O-(5'-adenylyl)-L-seryl-[protein] + diphosphate. The catalysed reaction is L-threonyl-[protein] + ATP = 3-O-(5'-adenylyl)-L-threonyl-[protein] + diphosphate. The enzyme catalyses L-tyrosyl-[protein] + ATP = O-(5'-adenylyl)-L-tyrosyl-[protein] + diphosphate. It catalyses the reaction L-histidyl-[protein] + UTP = N(tele)-(5'-uridylyl)-L-histidyl-[protein] + diphosphate. It carries out the reaction L-seryl-[protein] + UTP = O-(5'-uridylyl)-L-seryl-[protein] + diphosphate. The catalysed reaction is L-tyrosyl-[protein] + UTP = O-(5'-uridylyl)-L-tyrosyl-[protein] + diphosphate. Nucleotidyltransferase involved in the post-translational modification of proteins. It can catalyze the addition of adenosine monophosphate (AMP) or uridine monophosphate (UMP) to a protein, resulting in modifications known as AMPylation and UMPylation. The sequence is that of Protein nucleotidyltransferase YdiU from Burkholderia orbicola (strain MC0-3).